We begin with the raw amino-acid sequence, 123 residues long: uncharacterized protein (123 aa).

Transmembrane regions (helical) follow at residues 55 to 77 and 92 to 114; these read LLIHSYISFMLTLCFFLSLSTIL and FFINIIICYKHKSSAYCVYTIVY.

The protein resides in the cell membrane. This is an uncharacterized protein from Pasteurella multocida (strain Pm70).